A 149-amino-acid polypeptide reads, in one-letter code: Large ribosomal subunit protein bL9 (149 aa).

Belongs to the bacterial ribosomal protein bL9 family.

Binds to the 23S rRNA. The protein is Large ribosomal subunit protein bL9 of Mannheimia succiniciproducens (strain KCTC 0769BP / MBEL55E).